The primary structure comprises 350 residues: MAAAAATPRLEAPEPMPSYAQMLQRSWASALAAAQGCGDCGWGLARRGLAEHAHLAAPELLLAVLCALGWTALRWAATTHIFRPLAKRCRLQPRDAARLPESAWKLLFYLACWSYCAYLLLGTSYPFFHDPPSVFYDWRSGMAVPWDIAVAYLLQGSFYCHSIYATVYMDSWRKDSVVMLVHHVVTLLLIASSYAFRYHNVGLLVFFLHDVSDVQLEFTKLNIYFKARGGAYHRLHGLVANLGCLSFCFCWFWFRLYWFPLKVLYATCHCSLQSVPDIPYYFFFNILLLLLMVMNIYWFLYIVAFAAKVLTGQMRELEDLREYDTLEAQTAKPCKAEKPLRNGLVKDKLF.

Ala2 carries the post-translational modification N-acetylalanine. The next 6 helical transmembrane spans lie at 53-73 (AHLAAPELLLAVLCALGWTAL), 103-123 (AWKLLFYLACWSYCAYLLLGT), 148-168 (IAVAYLLQGSFYCHSIYATVY), 176-196 (SVVMLVHHVVTLLLIASSYAF), 239-259 (VANLGCLSFCFCWFWFRLYWF), and 287-307 (LLLLLMVMNIYWFLYIVAFAA). Residues 97–311 (ARLPESAWKL…IVAFAAKVLT (215 aa)) enclose the TLC domain.

Acetylated. Deacetylation by SIRT3 increases enzyme activity and promotes mitochondrial ceramide accumulation. In terms of tissue distribution, expressed in brain, skeletal muscle, heart and perigonadal white adipose tissue.

The protein resides in the endoplasmic reticulum membrane. The catalysed reaction is a sphingoid base + octadecanoyl-CoA = an N-octadecanoyl-sphingoid base + CoA + H(+). It catalyses the reaction sphinganine + octadecanoyl-CoA = N-(octadecanoyl)-sphinganine + CoA + H(+). The enzyme catalyses hexadecasphinganine + octadecanoyl-CoA = N-octadecanoylhexadecasphinganine + CoA + H(+). It carries out the reaction sphing-4-enine + octadecanoyl-CoA = N-octadecanoylsphing-4-enine + CoA + H(+). The catalysed reaction is heptadecasphing-4-enine + octadecanoyl-CoA = N-octadecanoyl-heptadecasphing-4-enine + CoA + H(+). It catalyses the reaction 2-hydroxyoctadecanoyl-CoA + sphinganine = N-(2-hydroxyoctadecanoyl)-sphinganine + CoA + H(+). The enzyme catalyses eicosanoyl-CoA + sphinganine = N-eicosanoylsphinganine + CoA + H(+). The protein operates within lipid metabolism; sphingolipid metabolism. Its activity is regulated as follows. Inhibited by fumonisin B1. Functionally, ceramide synthase that catalyzes the transfer of the acyl chain from acyl-CoA to a sphingoid base, with high selectivity toward stearoyl-CoA (octadecanoyl-CoA; C18:0-CoA). N-acylates sphinganine and sphingosine bases to form dihydroceramides and ceramides in de novo synthesis and salvage pathways, respectively. Plays a predominant role in skeletal muscle in regulating C18 ceramide and dihydroceramide levels with an impact on whole-body glucose metabolism and insulin sensitivity. Protects from diet-induced obesity by suppressing the uptake of glucose in multiple organs in a FGF21-dependent way. Generates C18 ceramides in the brain, playing a critical role in cerebellar development and Purkinje cell function. In response to cellular stress mediates mitophagy, a known defense mechanism against cell transformation and aging. Upon mitochondria fission, generates C18 ceramides that anchor lipidated MAP1LC3B/LC3B-II autophagolysosomes to outer mitochondrial membranes to eliminate damaged mitochondria. The polypeptide is Ceramide synthase 1 (Mus musculus (Mouse)).